We begin with the raw amino-acid sequence, 873 residues long: F-BAR domain only protein 1 (873 aa).

One can recognise an F-BAR domain in the interval 1–248 (MSYFGEHFWG…NVENVTVDML (248 aa)). The tract at residues 1–275 (MSYFGEHFWG…LDFDAYSSAA (275 aa)) is mediates membrane-binding. Residues 153–172 (RENTSQKEMDKAETKSKKAA) are disordered. Residues 155 to 178 (NTSQKEMDKAETKSKKAADSLRRS) are a coiled coil. The interval 267 to 439 (DFDAYSSAAL…KSLFGPPLES (173 aa)) is mediates interaction with the adaptor protein complex AP-2. Serine 295, serine 343, and serine 368 each carry phosphoserine. A disordered region spans residues 302–347 (SVDFLESDSGVPPEVDDEGFTVRPDISQNNGAEPPRFSSSDSDFDD). 2 disordered regions span residues 381–600 (GSLI…RGPS) and 813–833 (SGHLSASWQPQSGPSTPSPVA). Positions 447–466 (TGSSSLGFTSSPSPFSSSSP) are enriched in low complexity. A Phosphoserine modification is found at serine 518. Low complexity predominate over residues 567 to 576 (SLSPSPLGSS). The mediates interaction with AGFG1, CALM, DAB2, EPS15, EPS15R, ITSN1 and clathrin stretch occupies residues 593–873 (HGISRGPSPV…FATGMYLVSC (281 aa)). Residue serine 600 is modified to Phosphoserine. The MHD domain occupies 609-872 (ALPVATAFTE…RFATGMYLVS (264 aa)). Residues 816–827 (LSASWQPQSGPS) show a composition bias toward polar residues.

The protein belongs to the FCHO family. As to quaternary structure, may oligomerize and form homotetramer. Interacts with AP2A2 and AP2B1; 2 subunits of the adaptor protein complex AP-2. Interacts with DAB2. Interacts with clathrin (CLTC or CLTCL1). Interacts with EPS15, EPS15R and ITSN1. Interacts with AGFG1 and CALM. May interact with ACVR1; linking this receptor to clathrin-mediated endocytosis. As to expression, mainly detected in brain and spleen.

The protein localises to the membrane. The protein resides in the clathrin-coated pit. In terms of biological role, functions in an early step of clathrin-mediated endocytosis. Has both a membrane binding/bending activity and the ability to recruit proteins essential to the formation of functional clathrin-coated pits. May regulate Bmp signaling by regulating clathrin-mediated endocytosis of Bmp receptors. Involved in the regulation of T-cell poliferation and activation. Affects TCR clustering upon receptor triggering and modulates its internalisation, playing a role in TCR-dependent T-cell activation. The polypeptide is F-BAR domain only protein 1 (Mus musculus (Mouse)).